We begin with the raw amino-acid sequence, 106 residues long: Large ribosomal subunit protein uL24 (106 aa).

It belongs to the universal ribosomal protein uL24 family. Part of the 50S ribosomal subunit.

In terms of biological role, one of two assembly initiator proteins, it binds directly to the 5'-end of the 23S rRNA, where it nucleates assembly of the 50S subunit. Its function is as follows. One of the proteins that surrounds the polypeptide exit tunnel on the outside of the subunit. This Syntrophus aciditrophicus (strain SB) protein is Large ribosomal subunit protein uL24.